A 195-amino-acid chain; its full sequence is MKRSASVQRQTAETQVSVTVLLDGIGTQTISTGIPFFNHMLSLFAAHGFFDLTVQASGDIDVDFHHTVEDVGIVLGNSVNKALGDRKGIRRYGYAVTPMDEALAHAVIDLSNRPFLVFNVPSIPAAETGFGVQLAKEFFRAFAVNCGMTLHIRVDYGENEHHVIESVFKAVARALDMATSMDDRITGPLSTKGCI.

It belongs to the imidazoleglycerol-phosphate dehydratase family.

The protein localises to the cytoplasm. The enzyme catalyses D-erythro-1-(imidazol-4-yl)glycerol 3-phosphate = 3-(imidazol-4-yl)-2-oxopropyl phosphate + H2O. The protein operates within amino-acid biosynthesis; L-histidine biosynthesis; L-histidine from 5-phospho-alpha-D-ribose 1-diphosphate: step 6/9. In Desulfosudis oleivorans (strain DSM 6200 / JCM 39069 / Hxd3) (Desulfococcus oleovorans), this protein is Imidazoleglycerol-phosphate dehydratase.